We begin with the raw amino-acid sequence, 337 residues long: CMRF35-like molecule 1 (337 aa).

Positions 1–19 (MHLSLLVPFLFWITGCCTA) are cleaved as a signal peptide. The region spanning 20–125 (EDPVTGPEEV…LDPMFKVTVN (106 aa)) is the Ig-like V-type domain. Over 20–193 (EDPVTGPEEV…GVGDGFLDLS (174 aa)) the chain is Extracellular. Positions 39–45 (VQCRYTS) are plays an important role in murine norovirus (MNV) binding. 2 disulfide bridges follow: cysteine 41–cysteine 109 and cysteine 55–cysteine 63. A helical membrane pass occupies residues 194 to 214 (VLLPVISAVLLLLLLVASLFA). The Cytoplasmic segment spans residues 215–337 (WRMVRRQKKA…IRRPLPAAMP (123 aa)). Disordered regions lie at residues 248 to 270 (QPRT…GKDH) and 318 to 337 (LEEE…AAMP). The segment covering 252–266 (SPGSSWKKGSSMSSS) has biased composition (low complexity).

Belongs to the CD300 family. Interacts with PTPN6/SHP-1 in a tyrosine phosphorylation dependent manner. Interacts with IL4R. In terms of processing, phosphorylated on tyrosine. Expressed in myeloid cells. Present on the surface of macrophages (at protein level). Highly expressed by alveolar, splenic macrophages and bone marrow-derived dendritic cells. Expression is increased following aeroallergen challenge in macrophages, mast cells, and eosinophils.

It localises to the cell membrane. In terms of biological role, acts as an inhibitory receptor for myeloid cells and mast cells. Positively regulates the phagocytosis of apoptotic cells (efferocytosis) via phosphatidylserine (PS) recognition; recognizes and binds PS as a ligand which is expressed on the surface of apoptotic cells. Plays an important role in the maintenance of immune homeostasis, by promoting macrophage-mediated efferocytosis and by inhibiting dendritic cell-mediated efferocytosis. Negatively regulates Fc epsilon receptor-dependent mast cell activation and allergic responses via binding to ceramide which acts as a ligand. May act as a coreceptor for interleukin 4 (IL-4). Associates with and regulates IL-4 receptor alpha-mediated responses by augmenting IL-4- and IL-13-induced signaling. Negatively regulates the Toll-like receptor (TLR) signaling mediated by MYD88 and TRIF through activation of PTPN6/SHP-1 and PTPN11/SHP-2. Inhibits osteoclast formation. Induces macrophage cell death upon engagement. Functionally, (Microbial infection) Acts as a functional receptor for murine norovirus (MNV). Mediates binding to the cell surface and is both necessary and sufficient for viral entry and replication. This interaction requires Mg(2+) and Ca(2+) and is enhanced by bile acids. Primary determinant of MNV species tropism and is sufficient to render cells permissive to infection by MNV. Can render nonmurine mammalian cells susceptible to MNV infection. In Mus musculus (Mouse), this protein is CMRF35-like molecule 1 (Cd300lf).